Consider the following 87-residue polypeptide: UPF0335 protein Meso_3367 (87 aa).

Belongs to the UPF0335 family.

The chain is UPF0335 protein Meso_3367 from Chelativorans sp. (strain BNC1).